Reading from the N-terminus, the 154-residue chain is Cyanate hydratase (154 aa).

Catalysis depends on residues R100, E103, and S126.

It belongs to the cyanase family.

The catalysed reaction is cyanate + hydrogencarbonate + 3 H(+) = NH4(+) + 2 CO2. Its function is as follows. Catalyzes the reaction of cyanate with bicarbonate to produce ammonia and carbon dioxide. In Aspergillus clavatus (strain ATCC 1007 / CBS 513.65 / DSM 816 / NCTC 3887 / NRRL 1 / QM 1276 / 107), this protein is Cyanate hydratase.